We begin with the raw amino-acid sequence, 887 residues long: Golgin IMH1 (887 aa).

4 disordered regions span residues 16–50, 142–214, 240–301, and 783–822; these read LAKG…EELP, QESL…MKSQ, GASQ…SAGD, and LKMS…SISS. 2 stretches are compositionally biased toward basic and acidic residues: residues 37–50 and 145–210; these read GRRE…EELP and LEQR…HAAE. Residues 118–241 are a coiled coil; sequence AMLTEEIKRI…YKSTIQELGA (124 aa). Positions 240-254 are enriched in polar residues; that stretch reads GASQATGEAQPSSEA. Residues 258–273 show a composition bias toward basic residues; sequence RGKKGKGKRGKGKKRV. A coiled-coil region spans residues 299–788; the sequence is AGDEIIEAIE…LSTQLKMSKD (490 aa). The span at 788–807 shows a compositional bias: low complexity; sequence DMSSQSRHSSRSGSLVSPSS. A compositionally biased stretch (polar residues) spans 808–822; that stretch reads DNETGNSPRKISISS. Residues 837–885 enclose the GRIP domain; that stretch reads EMESNEKLAYIRNVLLGFLEHREQRSQLLPVVSTLLQLSSHDEKRLLTS.

It is found in the cytoplasm. Its subcellular location is the golgi apparatus membrane. Involved in vesicular transport between an endosomal compartment and the Golgi apparatus. This Eremothecium gossypii (strain ATCC 10895 / CBS 109.51 / FGSC 9923 / NRRL Y-1056) (Yeast) protein is Golgin IMH1 (IMH1).